A 547-amino-acid polypeptide reads, in one-letter code: Pyochelin synthase PchD (547 aa).

Belongs to the ATP-dependent AMP-binding enzyme family.

The enzyme catalyses salicylate + holo-[ACP] + ATP = salicyl-[ACP] + AMP + diphosphate. It functions in the pathway siderophore biosynthesis. It participates in antifungal biosynthesis. Functionally, involved in the biosynthesis of the siderophore pyochelin. Specifically adenylates salicylate and loads it onto the holo form of PchE via a thioester linkage to the phosphopanthetheine moiety. Is also involved in the synthesis of the antifungal antibiotic dihydroaeruginoic acid (Dha or hydroxyphenyl-thiazolinyl-carboxylate), a precursor of pyochelin. The protein is Pyochelin synthase PchD of Pseudomonas aeruginosa (strain ATCC 15692 / DSM 22644 / CIP 104116 / JCM 14847 / LMG 12228 / 1C / PRS 101 / PAO1).